Reading from the N-terminus, the 218-residue chain is Probable nicotinate-nucleotide adenylyltransferase (218 aa).

This sequence belongs to the NadD family.

It catalyses the reaction nicotinate beta-D-ribonucleotide + ATP + H(+) = deamido-NAD(+) + diphosphate. It functions in the pathway cofactor biosynthesis; NAD(+) biosynthesis; deamido-NAD(+) from nicotinate D-ribonucleotide: step 1/1. Catalyzes the reversible adenylation of nicotinate mononucleotide (NaMN) to nicotinic acid adenine dinucleotide (NaAD). In Halorhodospira halophila (strain DSM 244 / SL1) (Ectothiorhodospira halophila (strain DSM 244 / SL1)), this protein is Probable nicotinate-nucleotide adenylyltransferase.